Reading from the N-terminus, the 438-residue chain is Glutamyl-tRNA reductase (438 aa).

Substrate-binding positions include 49–52 (TCNR), Ser-109, 114–116 (EGQ), and Gln-120. The active-site Nucleophile is the Cys-50. 197–202 (GAGKMS) is an NADP(+) binding site.

The protein belongs to the glutamyl-tRNA reductase family. Homodimer.

It carries out the reaction (S)-4-amino-5-oxopentanoate + tRNA(Glu) + NADP(+) = L-glutamyl-tRNA(Glu) + NADPH + H(+). It functions in the pathway porphyrin-containing compound metabolism; protoporphyrin-IX biosynthesis; 5-aminolevulinate from L-glutamyl-tRNA(Glu): step 1/2. Its pathway is porphyrin-containing compound metabolism; chlorophyll biosynthesis. In terms of biological role, catalyzes the NADPH-dependent reduction of glutamyl-tRNA(Glu) to glutamate 1-semialdehyde (GSA). The protein is Glutamyl-tRNA reductase of Synechococcus elongatus (strain ATCC 33912 / PCC 7942 / FACHB-805) (Anacystis nidulans R2).